Reading from the N-terminus, the 179-residue chain is ATP synthase subunit b (179 aa).

The helical transmembrane segment at 27 to 47 (TAITFLVMLVVLGKFAWGPIV) threads the bilayer.

This sequence belongs to the ATPase B chain family. F-type ATPases have 2 components, F(1) - the catalytic core - and F(0) - the membrane proton channel. F(1) has five subunits: alpha(3), beta(3), gamma(1), delta(1), epsilon(1). F(0) has three main subunits: a(1), b(2) and c(10-14). The alpha and beta chains form an alternating ring which encloses part of the gamma chain. F(1) is attached to F(0) by a central stalk formed by the gamma and epsilon chains, while a peripheral stalk is formed by the delta and b chains.

It localises to the cell inner membrane. F(1)F(0) ATP synthase produces ATP from ADP in the presence of a proton or sodium gradient. F-type ATPases consist of two structural domains, F(1) containing the extramembraneous catalytic core and F(0) containing the membrane proton channel, linked together by a central stalk and a peripheral stalk. During catalysis, ATP synthesis in the catalytic domain of F(1) is coupled via a rotary mechanism of the central stalk subunits to proton translocation. Its function is as follows. Component of the F(0) channel, it forms part of the peripheral stalk, linking F(1) to F(0). This is ATP synthase subunit b from Anaeromyxobacter sp. (strain K).